The primary structure comprises 158 residues: C-type lectin (158 aa).

Residues 1–23 (MWQFTVVSLGWLAVFLSLSGAKG) form the signal peptide. Disulfide bonds link C26–C37, C54–C154, and C129–C146. Residues 33 to 155 (RNGVCNKLFP…CASLHPFICQ (123 aa)) form the C-type lectin domain. Positions 119 to 121 (EPN) match the Mannose-binding motif. 3 residues coordinate Ca(2+): E127, N142, and D143.

Belongs to the true venom lectin family. As to expression, expressed by the venom gland.

The protein localises to the secreted. Mannose-binding lectin which recognizes specific carbohydrate structures and agglutinates a variety of animal cells by binding to cell-surface glycoproteins and glycolipids. May be a calcium-dependent lectin. In Cerberus rynchops (Dog-faced water snake), this protein is C-type lectin.